A 438-amino-acid polypeptide reads, in one-letter code: Keratin, type I cytoskeletal 18 (438 aa).

Residues 4–83 are head; that stretch reads AVSSRSTVVS…TLSGNAVISN (80 aa). The interval 84–119 is coil 1A; sequence EKETMQDLNDRLSNYLETVRRLENANQQLEIQIREA. In terms of domain architecture, IF rod spans 84-395; it reads EKETMQDLND…HLLGGEDSDT (312 aa). Residues 120–136 are linker 1; that stretch reads MEKRGPSVRDYSNYEKI. The tract at residues 137–228 is coil 1B; that stretch reads IKELRDQIYD…KNHEDEVIAL (92 aa). The tract at residues 229–252 is linker 12; sequence RNQVNSCGVQVDLDAPKGTDLAEI. A coil 2 region spans residues 253–393; that stretch reads MATLRAEYEA…YRHLLGGEDS (141 aa). A tail region spans residues 394–438; it reads DTLSLQDALSAMKVSNVQTVQKIVVTTQKLVDGKVVEDSTVTETK.

Belongs to the intermediate filament family. Heterotetramer of two type I and two type II keratins. Keratin-18 associates with keratin-8. Phosphorylated. In terms of processing, proteolytically cleaved by caspases during epithelial cell apoptosis. As to expression, expressed at low levels in skin.

In terms of biological role, when phosphorylated, plays a role in filament reorganization. In Protopterus aethiopicus (Marbled lungfish), this protein is Keratin, type I cytoskeletal 18.